The chain runs to 190 residues: Potassium-transporting ATPase KdpC subunit (190 aa).

A helical transmembrane segment spans residues 10 to 30 (TFIFLLLITGGVYPLLTTVLG).

The protein belongs to the KdpC family. The system is composed of three essential subunits: KdpA, KdpB and KdpC.

It localises to the cell inner membrane. Functionally, part of the high-affinity ATP-driven potassium transport (or Kdp) system, which catalyzes the hydrolysis of ATP coupled with the electrogenic transport of potassium into the cytoplasm. This subunit acts as a catalytic chaperone that increases the ATP-binding affinity of the ATP-hydrolyzing subunit KdpB by the formation of a transient KdpB/KdpC/ATP ternary complex. The polypeptide is Potassium-transporting ATPase KdpC subunit (Escherichia coli (strain 55989 / EAEC)).